Consider the following 238-residue polypeptide: Succinate dehydrogenase iron-sulfur subunit (238 aa).

One can recognise a 2Fe-2S ferredoxin-type domain in the interval 1–97; the sequence is MKLEFSIYRY…KIVIRPLPGL (97 aa). The [2Fe-2S] cluster site is built by C55, C60, and C75. The 4Fe-4S ferredoxin-type domain occupies 139 to 169; the sequence is QREKLDGLYECILCACCSTSCPSFWWNPDKF. Positions 149, 152, and 155 each coordinate [4Fe-4S] cluster. [3Fe-4S] cluster is bound at residue C159. Position 164 (W164) interacts with a ubiquinone. C206 and C212 together coordinate [3Fe-4S] cluster. C216 lines the [4Fe-4S] cluster pocket.

Belongs to the succinate dehydrogenase/fumarate reductase iron-sulfur protein family. In terms of assembly, part of an enzyme complex containing four subunits: a flavoprotein, an iron-sulfur, cytochrome b-556, and a hydrophobic anchor protein. The cofactor is [2Fe-2S] cluster. It depends on [3Fe-4S] cluster as a cofactor. [4Fe-4S] cluster serves as cofactor.

It carries out the reaction a quinone + succinate = fumarate + a quinol. Its pathway is carbohydrate metabolism; tricarboxylic acid cycle; fumarate from succinate (bacterial route): step 1/1. Functionally, two distinct, membrane-bound, FAD-containing enzymes are responsible for the catalysis of fumarate and succinate interconversion; the fumarate reductase is used in anaerobic growth, and the succinate dehydrogenase is used in aerobic growth. The polypeptide is Succinate dehydrogenase iron-sulfur subunit (sdhB) (Salmonella typhimurium (strain LT2 / SGSC1412 / ATCC 700720)).